The following is a 217-amino-acid chain: Adenylate kinase (217 aa).

An ATP-binding site is contributed by 10–15; it reads GAGKGT. The tract at residues 30-59 is NMP; the sequence is STGDMFRAAMKEETDLGLEAKSYIDKGELV. Residues Thr31, Arg36, 57–59, 85–88, and Gln92 contribute to the AMP site; these read ELV and GFPR. The tract at residues 126 to 163 is LID; that stretch reads GRRICKNCGATYHLVFNPPAKENVCDKCGGELYQREDD. Residue Arg127 coordinates ATP. Positions 130 and 133 each coordinate Zn(2+). 136 to 137 lines the ATP pocket; sequence TY. Residues Cys150 and Cys153 each contribute to the Zn(2+) site. Residues Arg160 and Arg171 each coordinate AMP. Lys199 serves as a coordination point for ATP.

The protein belongs to the adenylate kinase family. As to quaternary structure, monomer.

The protein localises to the cytoplasm. The catalysed reaction is AMP + ATP = 2 ADP. Its pathway is purine metabolism; AMP biosynthesis via salvage pathway; AMP from ADP: step 1/1. Catalyzes the reversible transfer of the terminal phosphate group between ATP and AMP. Plays an important role in cellular energy homeostasis and in adenine nucleotide metabolism. This is Adenylate kinase from Bacillus licheniformis (strain ATCC 14580 / DSM 13 / JCM 2505 / CCUG 7422 / NBRC 12200 / NCIMB 9375 / NCTC 10341 / NRRL NRS-1264 / Gibson 46).